Here is a 244-residue protein sequence, read N- to C-terminus: Glucosamine-6-phosphate deaminase (244 aa).

D67 serves as the catalytic Proton acceptor; for enolization step. The active-site For ring-opening step is the N133. H135 (proton acceptor; for ring-opening step) is an active-site residue. E140 (for ring-opening step) is an active-site residue.

The protein belongs to the glucosamine/galactosamine-6-phosphate isomerase family. NagB subfamily.

It catalyses the reaction alpha-D-glucosamine 6-phosphate + H2O = beta-D-fructose 6-phosphate + NH4(+). It functions in the pathway amino-sugar metabolism; N-acetylneuraminate degradation; D-fructose 6-phosphate from N-acetylneuraminate: step 5/5. Functionally, catalyzes the reversible isomerization-deamination of glucosamine 6-phosphate (GlcN6P) to form fructose 6-phosphate (Fru6P) and ammonium ion. This chain is Glucosamine-6-phosphate deaminase, found in Mycoplasma mycoides subsp. mycoides SC (strain CCUG 32753 / NCTC 10114 / PG1).